The sequence spans 606 residues: R-linalool synthase, chloroplastic (606 aa).

The transit peptide at 1 to 51 directs the protein to the chloroplast; the sequence is MCTIISVNHHHVAILSKPKVKLFHTKNKRSASINLPWSLSPSSSAASRPIS. (2E)-geranyl diphosphate contacts are provided by Arg-326, Asp-363, Asp-367, Arg-504, and Asp-507. Mg(2+) contacts are provided by Asp-363 and Asp-367. The DDXXD motif signature appears at 363 to 367; sequence DDVYD. Positions 507, 511, and 515 each coordinate Mg(2+).

It belongs to the terpene synthase family. Tpsb subfamily. Requires Mg(2+) as cofactor. The cofactor is Mn(2+).

The protein localises to the plastid. It localises to the chloroplast. The catalysed reaction is (2E)-geranyl diphosphate + H2O = (R)-linalool + diphosphate. Its pathway is secondary metabolite biosynthesis; terpenoid biosynthesis. Functionally, monoterpene synthase that catalyzes the formation of (3R)-linalool from geranyl diphosphate, but not from farnesyl diphosphate or geranylgeranyl diphosphate. This Mentha aquatica (Water mint) protein is R-linalool synthase, chloroplastic.